The following is a 20-amino-acid chain: Ferric reductase A (20 aa).

Monomer.

The catalysed reaction is 2 a Fe(II)-siderophore + NAD(+) + H(+) = 2 a Fe(III)-siderophore + NADH. Functionally, reductase activity that acts on Fe(3+)-chelates and NADH as an electron donor and requires the presence of FMN for full activity. May play a role in iron uptake. This chain is Ferric reductase A (ferA), found in Paracoccus denitrificans.